The primary structure comprises 342 residues: Phosphoribosylformylglycinamidine cyclo-ligase (342 aa).

This sequence belongs to the AIR synthase family.

It is found in the cytoplasm. The enzyme catalyses 2-formamido-N(1)-(5-O-phospho-beta-D-ribosyl)acetamidine + ATP = 5-amino-1-(5-phospho-beta-D-ribosyl)imidazole + ADP + phosphate + H(+). The protein operates within purine metabolism; IMP biosynthesis via de novo pathway; 5-amino-1-(5-phospho-D-ribosyl)imidazole from N(2)-formyl-N(1)-(5-phospho-D-ribosyl)glycinamide: step 2/2. The chain is Phosphoribosylformylglycinamidine cyclo-ligase from Gloeothece citriformis (strain PCC 7424) (Cyanothece sp. (strain PCC 7424)).